A 1682-amino-acid chain; its full sequence is Merozoite surface protein 1 (1682 aa).

The first 19 residues, methionine 1 to cysteine 19, serve as a signal peptide directing secretion. The disordered stretch occupies residues alanine 68–alanine 110. N-linked (GlcNAc...) asparagine glycans are attached at residues asparagine 233, asparagine 462, asparagine 528, and asparagine 599. The disordered stretch occupies residues serine 696–threonine 729. N-linked (GlcNAc...) asparagine glycans are attached at residues asparagine 785, asparagine 881, asparagine 901, asparagine 947, asparagine 1071, and asparagine 1178. The tract at residues isoleucine 870–alanine 918 is disordered. Over residues threonine 871–asparagine 909 the composition is skewed to low complexity. Disordered regions lie at residues threonine 1212–proline 1241 and lysine 1433–lysine 1453. Over residues valine 1227–proline 1241 the composition is skewed to polar residues. Residues serine 1437 to proline 1446 show a composition bias toward pro residues. Asparagine 1569 carries an N-linked (GlcNAc...) asparagine glycan. 2 consecutive EGF-like domains span residues histidine 1573–proline 1613 and asparagine 1614–serine 1661. Disulfide bonds link cysteine 1575–cysteine 1586, cysteine 1580–cysteine 1596, cysteine 1598–cysteine 1609, cysteine 1617–cysteine 1630, cysteine 1624–cysteine 1644, and cysteine 1646–cysteine 1660. The GPI-anchor amidated serine moiety is linked to residue serine 1661. Positions serine 1662–isoleucine 1682 are cleaved as a propeptide — removed in mature form.

As to quaternary structure, forms a complex composed of subunits p83, p30, p38, and p42 which remain non-covalently associated; the complex is formed at the merozoite surface prior to egress from host erythrocytes. Forms a complex composed of processed MSP1 subunits, MSP6 subunit p36 and MSP7; the complex is formed at the merozoite surface prior to egress from host erythrocytes. Within the complex, interacts (via subunit p38) with MSP6 subunit p36 and (via subunits p83, p30 and p38) with MSP7 (via subunit p22). Forms a complex composed of MSP1, MSP6, DBLMSP1 and DBLMSP2. Within the complex, interacts (via subunit p38) with DBLMSP1 and DBLMSP2. Forms a complex composed of MSP1, and rhoptry proteins RhopH3, RAP1 and CLAG9/RhopH3. Within the complex, interacts (via subunits p42 and p19) with RhopH3 (via C-terminus). Forms a complex composed of MSP1, MSP6, MSP7, MSP9 and MSP3; within the complex, MSP6 and MSP9 mediate the binding to the host erythrocyte. Interacts (via subunits p19 and p42) with MSP9; the interaction is direct; MSP1 subunits p19 or p42, and MSP9 form a co-ligand complex that interacts with host SLC4A1/Band 3 protein. May interact with PFD6. Interacts with host spectrin. In terms of assembly, interacts with host glycophorin GYPA in a sialic acid-independent manner. Interacts with host proinflammatory cytokine S100P; the interaction blocks S100P inflammatory and chemotactic activities. As to quaternary structure, interacts with host SLC4A1/Band 3 (via 5ABC region) on the host erythrocyte surface in a sialic acid-independent manner. In terms of processing, the p190 precursor is cleaved by SUB1 prior to merozoite egress into 4 subunits p83, p30, p38, and p42 which remain non-covalently associated. SUB1-mediated proteolytic cleavage occurs in an orderly manner; the first cleavage occurs at the p30/p38 site, followed by cleavage at the p83/p30 site, the last cleavage occurs at the p38/p42 site. The order of cleavage is essential for parasite viability. SUB1-mediated processing is essential for merozoite egress. In a second processing step during erythrocyte invasion, p42 is cleaved by SUB2 into p33 and p19; the latter remains attached to the merozoite surface via its GPI-anchor and is endocytosed during the subsequent ring stage.

Its subcellular location is the cell membrane. It is found in the secreted. The protein resides in the vacuole membrane. In terms of biological role, during the asexual blood stage, involved in merozoite egress from host erythrocytes possibly via its interaction with the host cytoskeleton protein spectrin resulting in the destabilization of the host cytoskeleton and thus leading to erythrocyte cell membrane rupture. Involved in the binding to host erythrocytes and is required for host erythrocyte invasion. Its function is as follows. By binding to host proinflammatory cytokine S100P may interfere with host immune responses. Functionally, involved in merozoite invasion of host erythrocytes. May play a role in the biogenesis and/or function of the food vacuole during the intraerythrocytic development. The polypeptide is Merozoite surface protein 1 (Plasmodium falciparum (isolate ro-33 / Ghana)).